Here is a 123-residue protein sequence, read N- to C-terminus: Small ribosomal subunit protein uS13 (123 aa).

The tract at residues 103–123 (TRTNARTRKGPKKTVGVRRKK) is disordered. Over residues 105–123 (TNARTRKGPKKTVGVRRKK) the composition is skewed to basic residues.

It belongs to the universal ribosomal protein uS13 family. In terms of assembly, part of the 30S ribosomal subunit. Forms a loose heterodimer with protein S19. Forms two bridges to the 50S subunit in the 70S ribosome.

Its function is as follows. Located at the top of the head of the 30S subunit, it contacts several helices of the 16S rRNA. In the 70S ribosome it contacts the 23S rRNA (bridge B1a) and protein L5 of the 50S subunit (bridge B1b), connecting the 2 subunits; these bridges are implicated in subunit movement. Contacts the tRNAs in the A and P-sites. This Desulforudis audaxviator (strain MP104C) protein is Small ribosomal subunit protein uS13.